Reading from the N-terminus, the 547-residue chain is MFS-type transporter ungB (547 aa).

14 helical membrane passes run 14–34 (LLVT…ETVL), 50–70 (DVGW…MAWG), 80–100 (WVFL…GVSP), 111–131 (IAGL…SNTI), 138–158 (IYLG…PVIG), 169–189 (WCFF…VFCL), 210–230 (LLGS…LEWG), 238–258 (SWRV…FAVV), 279–299 (LGLI…VYYL), 316–336 (LAIL…GILV), 343–363 (TPFL…LSSL), 366–386 (ASGL…IGLG), 392–412 (VVPS…TLCF), and 475–495 (AVSE…LGSA). The segment at 503-547 (PGHKEATEKVEGEGQGQGQQQEQDQGQGWGEVGESHALAHPTADK) is disordered. The segment covering 504–514 (GHKEATEKVEG) has biased composition (basic and acidic residues).

Belongs to the major facilitator superfamily. TCR/Tet family.

Its subcellular location is the membrane. In terms of biological role, MFS-type transporter; part of the gene cluster that mediates the biosynthesis of the unguisins, gamma-aminobutyric acid (GABA)-containing fungal cyclic heptapeptides with the amino acid sequence cyclo-(D-Ala1-D-Val2-L-Phe3-D-Val4-D-Ala5-D-Trp6-GABA7) for unguisin A and cyclo-(D-Ala1-D-Val2-L-Leu3-D-Val4-D-Ala5-D-Trp6-GABA7) for unguisin B. May be involved in the secretion of unguisins. In Aspergillus violaceofuscus (strain CBS 115571), this protein is MFS-type transporter ungB.